Consider the following 408-residue polypeptide: COP9 signalosome complex subunit 4 (408 aa).

A PCI domain is found at 194–374 (RIQDARRRFL…GIIYFESNTT (181 aa)).

It belongs to the CSN4 family. Component of the COP9 signalosome (CSN) complex.

It is found in the cytoplasm. Its subcellular location is the nucleus. Component of the COP9 signalosome (CSN) complex that acts as an regulator of the ubiquitin (Ubl) conjugation pathway by mediating the deneddylation of the cullin subunit of SCF-type E3 ubiquitin-protein ligase complexes. The CSN complex seems to link protein degradation to sexual development. Required for fruit body formation. The protein is COP9 signalosome complex subunit 4 (csnD) of Emericella nidulans (strain FGSC A4 / ATCC 38163 / CBS 112.46 / NRRL 194 / M139) (Aspergillus nidulans).